Here is a 467-residue protein sequence, read N- to C-terminus: MSTKIVETITLECETGNYHSFCPISCVSWLYQKIEDSFFLVVGTKTCGYFLQNALGVMIFAEPRYAMAELEEGDISAHLNDYEELKTLCIRIRKDRDPSVIIWIGTCTTEIIKMDLEGMAPKLEYEIGVPILVARANGLDYAFTQGEDTVLAVMAHRCPDQELPIGESKETKTKLFPFPLLKEKNLVEYANHPPLVIFGSLPSNLVSQLDTELRRQFIKVSGWLPAQRYADLPSLGDGVYVCGVNPFLSRTATTLIRRKKCELIVAPFPIGPDGTRAWIERICPVFGIEAQSLEEREERIWESLKDYLDLVRGKSVFFMGDNLIEISIARFLIRCGMIVYEIGIPYMDKRYQAAELALLQNTCIRMCMPIPRIVEKPDNSNQIRRMRELQPDLAITGMAHANPLGARGIGTKWSVEFTFAQIHGFANARDVLELVTRPLRRNENLDNLDRTTLVRKNNELYTSTPVK.

[4Fe-4S] cluster is bound by residues Cys22, Cys47, and Cys107.

Belongs to the BchN/ChlN family. In terms of assembly, protochlorophyllide reductase is composed of three subunits; ChlL, ChlN and ChlB. Forms a heterotetramer of two ChlB and two ChlN subunits. The cofactor is [4Fe-4S] cluster.

The protein resides in the plastid. It localises to the chloroplast. The catalysed reaction is chlorophyllide a + oxidized 2[4Fe-4S]-[ferredoxin] + 2 ADP + 2 phosphate = protochlorophyllide a + reduced 2[4Fe-4S]-[ferredoxin] + 2 ATP + 2 H2O. It participates in porphyrin-containing compound metabolism; chlorophyll biosynthesis (light-independent). Its function is as follows. Component of the dark-operative protochlorophyllide reductase (DPOR) that uses Mg-ATP and reduced ferredoxin to reduce ring D of protochlorophyllide (Pchlide) to form chlorophyllide a (Chlide). This reaction is light-independent. The NB-protein (ChlN-ChlB) is the catalytic component of the complex. This chain is Light-independent protochlorophyllide reductase subunit N, found in Pinus thunbergii (Japanese black pine).